We begin with the raw amino-acid sequence, 529 residues long: Type I inositol polyphosphate 5-phosphatase 5 (529 aa).

Catalytic regions lie at residues aspartate 371–threonine 386 and lysine 451–glutamate 466.

The protein belongs to the inositol polyphosphate 5-phosphatase family.

Functionally, may be involved in the regulation of root hairs development. Required for restricting both the size of the root-hair initiation site and the width of the root hairs during the transition to tip growth, but is not required for normal subsequent tip growth. The polypeptide is Type I inositol polyphosphate 5-phosphatase 5 (Arabidopsis thaliana (Mouse-ear cress)).